The primary structure comprises 294 residues: Bifunctional protein FolD (294 aa).

NADP(+)-binding positions include 166-168, S191, and I232; that span reads GRS.

The protein belongs to the tetrahydrofolate dehydrogenase/cyclohydrolase family. Homodimer.

The catalysed reaction is (6R)-5,10-methylene-5,6,7,8-tetrahydrofolate + NADP(+) = (6R)-5,10-methenyltetrahydrofolate + NADPH. It carries out the reaction (6R)-5,10-methenyltetrahydrofolate + H2O = (6R)-10-formyltetrahydrofolate + H(+). It functions in the pathway one-carbon metabolism; tetrahydrofolate interconversion. Catalyzes the oxidation of 5,10-methylenetetrahydrofolate to 5,10-methenyltetrahydrofolate and then the hydrolysis of 5,10-methenyltetrahydrofolate to 10-formyltetrahydrofolate. This chain is Bifunctional protein FolD, found in Bradyrhizobium sp. (strain ORS 278).